The chain runs to 585 residues: Acetolactate synthase large subunit (585 aa).

E60 contacts thiamine diphosphate. FAD-binding positions include R162, 272 to 293 (HGTA…LGAR), and 315 to 334 (DIDP…IISD). The tract at residues 407–486 (QHQMWAAQFL…IKIFIINNQW (80 aa)) is thiamine pyrophosphate binding. Mg(2+) contacts are provided by D457 and N484.

This sequence belongs to the TPP enzyme family. Dimer of large and small chains. Requires Mg(2+) as cofactor. It depends on thiamine diphosphate as a cofactor.

It localises to the plastid. It is found in the chloroplast. It carries out the reaction 2 pyruvate + H(+) = (2S)-2-acetolactate + CO2. Its pathway is amino-acid biosynthesis; L-isoleucine biosynthesis; L-isoleucine from 2-oxobutanoate: step 1/4. It functions in the pathway amino-acid biosynthesis; L-valine biosynthesis; L-valine from pyruvate: step 1/4. The protein is Acetolactate synthase large subunit (ilvB) of Cyanidium caldarium (Red alga).